The primary structure comprises 601 residues: uncharacterized protein (601 aa).

Positions 1 to 24 (MKLSSLPSGLGLASLLGLISSATA) are cleaved as a signal peptide.

The protein resides in the membrane. This is an uncharacterized protein from Schizosaccharomyces pombe (strain 972 / ATCC 24843) (Fission yeast).